The primary structure comprises 464 residues: Protein FAM90A5 (464 aa).

Disordered regions lie at residues 16–42 (RAQT…DPRL), 70–389 (PATL…HDGA), and 415–437 (HSPE…SEAP). Basic and acidic residues-rich tracts occupy residues 74 to 89 (GKKE…KPRV) and 97 to 114 (NKDK…DPQR). Low complexity predominate over residues 180–197 (LASLSPLRKASLSSSSSL).

Belongs to the FAM90 family.

This chain is Protein FAM90A5, found in Homo sapiens (Human).